A 323-amino-acid chain; its full sequence is Methenyltetrahydromethanopterin cyclohydrolase (323 aa).

Belongs to the MCH family.

The protein localises to the cytoplasm. The catalysed reaction is 5,10-methenyl-5,6,7,8-tetrahydromethanopterin + H2O = N(5)-formyl-5,6,7,8-tetrahydromethanopterin + H(+). It participates in one-carbon metabolism; methanogenesis from CO(2); 5,10-methenyl-5,6,7,8-tetrahydromethanopterin from CO(2): step 3/3. Functionally, catalyzes the reversible interconversion of 5-formyl-H(4)MPT to methenyl-H(4)MPT(+). This Methanococcus maripaludis (strain DSM 14266 / JCM 13030 / NBRC 101832 / S2 / LL) protein is Methenyltetrahydromethanopterin cyclohydrolase.